Consider the following 666-residue polypeptide: ATP-dependent zinc metalloprotease FtsH (666 aa).

Over 1–6 (MKSETG) the chain is Cytoplasmic. A helical membrane pass occupies residues 7 to 27 (YMGFVVVLVFMVLLALQLATL). The Periplasmic segment spans residues 28 to 116 (SAPATQIAYS…TRYRGADDDT (89 aa)). A helical transmembrane segment spans residues 117-137 (WIGTLASWIVPIAVFALVWNL). The Cytoplasmic portion of the chain corresponds to 138-666 (MLRRPRGGLQ…ADNADHSVPQ (529 aa)). 210-217 (GAPGTGKT) is a binding site for ATP. H432 provides a ligand contact to Zn(2+). E433 is a catalytic residue. Residues H436 and D509 each coordinate Zn(2+). The tract at residues 612 to 666 (NDEPTPEPGARDPGGDAAKRSGIGAAPAKPPAEVGSAELRDPARKADNADHSVPQ) is disordered. Basic and acidic residues-rich tracts occupy residues 620–630 (GARDPGGDAAK) and 649–666 (ELRD…SVPQ).

This sequence in the central section; belongs to the AAA ATPase family. In the C-terminal section; belongs to the peptidase M41 family. In terms of assembly, homohexamer. Zn(2+) is required as a cofactor.

The protein resides in the cell inner membrane. Its function is as follows. Acts as a processive, ATP-dependent zinc metallopeptidase for both cytoplasmic and membrane proteins. Plays a role in the quality control of integral membrane proteins. This chain is ATP-dependent zinc metalloprotease FtsH, found in Burkholderia pseudomallei (strain 1710b).